Here is an 869-residue protein sequence, read N- to C-terminus: Translation initiation factor IF-2 (869 aa).

Disordered regions lie at residues 51–78 (KQHG…NMGK) and 105–277 (EEET…SDLK). A compositionally biased stretch (polar residues) spans 67-76 (QRKTTSTLNM). The span at 110–119 (RALAEQQAQL) shows a compositional bias: low complexity. Residues 120–241 (EAEKAAAEEA…KKQEAEEVHV (122 aa)) are compositionally biased toward basic and acidic residues. The tr-type G domain maps to 369–542 (SRAPVVTIMG…ELLDLKAPPT (174 aa)). A G1 region spans residues 378 to 385 (GHVDHGKT). A GTP-binding site is contributed by 378–385 (GHVDHGKT). Positions 403-407 (GITQH) are G2. Residues 424–427 (DTPG) are G3. GTP-binding positions include 424–428 (DTPGH) and 478–481 (NKMD). A G4 region spans residues 478–481 (NKMD). A G5 region spans residues 514-516 (SAK).

This sequence belongs to the TRAFAC class translation factor GTPase superfamily. Classic translation factor GTPase family. IF-2 subfamily.

The protein localises to the cytoplasm. Its function is as follows. One of the essential components for the initiation of protein synthesis. Protects formylmethionyl-tRNA from spontaneous hydrolysis and promotes its binding to the 30S ribosomal subunits. Also involved in the hydrolysis of GTP during the formation of the 70S ribosomal complex. This Pseudoalteromonas atlantica (strain T6c / ATCC BAA-1087) protein is Translation initiation factor IF-2.